A 237-amino-acid polypeptide reads, in one-letter code: Ribonuclease PH (237 aa).

Phosphate-binding positions include Arg-86 and 124 to 126 (GTR).

Belongs to the RNase PH family. In terms of assembly, homohexameric ring arranged as a trimer of dimers.

It catalyses the reaction tRNA(n+1) + phosphate = tRNA(n) + a ribonucleoside 5'-diphosphate. Phosphorolytic 3'-5' exoribonuclease that plays an important role in tRNA 3'-end maturation. Removes nucleotide residues following the 3'-CCA terminus of tRNAs; can also add nucleotides to the ends of RNA molecules by using nucleoside diphosphates as substrates, but this may not be physiologically important. Probably plays a role in initiation of 16S rRNA degradation (leading to ribosome degradation) during starvation. This chain is Ribonuclease PH, found in Zymomonas mobilis subsp. mobilis (strain ATCC 31821 / ZM4 / CP4).